Consider the following 390-residue polypeptide: Chorismate synthase (390 aa).

An NADP(+)-binding site is contributed by arginine 48. FMN is bound by residues arginine 126–serine 128, glycine 286, lysine 301–serine 305, and arginine 328.

This sequence belongs to the chorismate synthase family. It depends on FMNH2 as a cofactor.

The catalysed reaction is 5-O-(1-carboxyvinyl)-3-phosphoshikimate = chorismate + phosphate. Its pathway is metabolic intermediate biosynthesis; chorismate biosynthesis; chorismate from D-erythrose 4-phosphate and phosphoenolpyruvate: step 7/7. Its function is as follows. Catalyzes the anti-1,4-elimination of the C-3 phosphate and the C-6 proR hydrogen from 5-enolpyruvylshikimate-3-phosphate (EPSP) to yield chorismate, which is the branch point compound that serves as the starting substrate for the three terminal pathways of aromatic amino acid biosynthesis. This reaction introduces a second double bond into the aromatic ring system. This is Chorismate synthase from Sulfurisphaera tokodaii (strain DSM 16993 / JCM 10545 / NBRC 100140 / 7) (Sulfolobus tokodaii).